The chain runs to 157 residues: Protein Smg homolog (157 aa).

Belongs to the Smg family.

The chain is Protein Smg homolog from Shewanella putrefaciens (strain CN-32 / ATCC BAA-453).